A 1014-amino-acid chain; its full sequence is EMILIN-1-A (1014 aa).

The signal sequence occupies residues 1–27 (MALYFVYLSTLLALILLGDNWAAGTYA). The EMI domain maps to 53–128 (HRNWCAYVVT…HGYSGDDCSD (76 aa)). Intrachain disulfides connect C57–C118, C84–C89, and C117–C126. 2 disordered regions span residues 125–150 (DCSD…SDSD) and 811–869 (QDFT…ANVP). A compositionally biased stretch (basic and acidic residues) spans 134 to 150 (HDSRARPTGEEGRSDSD). The stretch at 145–179 (GRSDSDRIRQLEEQIQSLNKNLHNLQKKIYEESQR) forms a coiled coil. The Collagen-like domain maps to 815–865 (GPPGLPGPQGEKGSKGPPGPRGPLGKEGPQGRVGPVGPPGLRGEQGPPGKD). Residues 840-856 (KEGPQGRVGPVGPPGLR) are compositionally biased toward low complexity. The region spanning 866–1012 (ANVPRLSFSA…GMLLYEESED (147 aa)) is the C1q domain.

Its subcellular location is the secreted. The protein localises to the extracellular space. It localises to the extracellular matrix. Its function is as follows. May be responsible for anchoring smooth muscle cells to elastic fibers, and may be involved not only in the formation of the elastic fiber, but also in the processes that regulate vessel assembly. Has cell adhesive capacity. The chain is EMILIN-1-A from Danio rerio (Zebrafish).